An 89-amino-acid chain; its full sequence is MKPGIHPDYRTVLFHDTAADVYFLIGSTVDTDRSHTYSDGKTYPYVALDVSSASHPVYTGQQRKTQSEGRIAGFNKRFASFGSGAKAAQ.

The protein belongs to the bacterial ribosomal protein bL31 family. Type B subfamily. As to quaternary structure, part of the 50S ribosomal subunit.

The protein is Large ribosomal subunit protein bL31B of Pseudomonas fluorescens (strain ATCC BAA-477 / NRRL B-23932 / Pf-5).